The sequence spans 108 residues: U-scoloptoxin(10)-Sm1a (108 aa).

Residues 1–24 (MNKQWLHFFSVLLLCYVIEETCSL) form the signal peptide.

This sequence belongs to the scoloptoxin-10 family. In terms of processing, contains 3 disulfide bonds. Expressed by the venom gland.

Its subcellular location is the secreted. The chain is U-scoloptoxin(10)-Sm1a from Scolopendra morsitans (Tanzanian blue ringleg centipede).